The following is a 521-amino-acid chain: Bifunctional purine biosynthesis protein PurH (521 aa).

Residues 1–145 (MIKQALISVS…KNHRDVTVIV (145 aa)) form the MGS-like domain.

The protein belongs to the PurH family.

The catalysed reaction is (6R)-10-formyltetrahydrofolate + 5-amino-1-(5-phospho-beta-D-ribosyl)imidazole-4-carboxamide = 5-formamido-1-(5-phospho-D-ribosyl)imidazole-4-carboxamide + (6S)-5,6,7,8-tetrahydrofolate. The enzyme catalyses IMP + H2O = 5-formamido-1-(5-phospho-D-ribosyl)imidazole-4-carboxamide. It participates in purine metabolism; IMP biosynthesis via de novo pathway; 5-formamido-1-(5-phospho-D-ribosyl)imidazole-4-carboxamide from 5-amino-1-(5-phospho-D-ribosyl)imidazole-4-carboxamide (10-formyl THF route): step 1/1. Its pathway is purine metabolism; IMP biosynthesis via de novo pathway; IMP from 5-formamido-1-(5-phospho-D-ribosyl)imidazole-4-carboxamide: step 1/1. This is Bifunctional purine biosynthesis protein PurH from Burkholderia multivorans (strain ATCC 17616 / 249).